We begin with the raw amino-acid sequence, 1508 residues long: uncharacterized protein (1508 aa).

Positions 149 to 267 form a coiled coil; that stretch reads ARRQQWRLRR…ARSLQEHRAT (119 aa). 5 disordered regions span residues 248 to 268, 345 to 403, 536 to 575, 725 to 754, and 868 to 916; these read ERSE…RATE, SQDW…LAGS, FLKK…GKNL, GLEE…SQEH, and EAKS…AEPW. Positions 868–881 are enriched in basic and acidic residues; the sequence is EAKSKESGEGDKPG. Residues 972–1034 are a coiled coil; the sequence is ISRLERDNHR…KGNLGQLQKA (63 aa). 2 disordered regions span residues 1158 to 1186 and 1204 to 1246; these read LAAG…LVWR and KEAH…EEDP. Residues 1163-1172 are compositionally biased toward polar residues; it reads TGPSTGTGNS. A compositionally biased stretch (basic and acidic residues) spans 1204-1215; that stretch reads KEAHLEKEEKRP. Polar residues predominate over residues 1220 to 1230; that stretch reads AQGQALSSLSN. A coiled-coil region spans residues 1271–1302; that stretch reads HQASLDEATRLQEELQAKLEELQKKQHEAKLA.

This is an uncharacterized protein from Homo sapiens (Human).